A 128-amino-acid polypeptide reads, in one-letter code: Glycine cleavage system H protein (128 aa).

One can recognise a Lipoyl-binding domain in the interval 24–105 (SLTIGVTDHA…AYAAWLFKLK (82 aa)). Lys-65 carries the N6-lipoyllysine modification.

It belongs to the GcvH family. In terms of assembly, the glycine cleavage system is composed of four proteins: P, T, L and H. It depends on (R)-lipoate as a cofactor.

In terms of biological role, the glycine cleavage system catalyzes the degradation of glycine. The H protein shuttles the methylamine group of glycine from the P protein to the T protein. The sequence is that of Glycine cleavage system H protein from Aromatoleum aromaticum (strain DSM 19018 / LMG 30748 / EbN1) (Azoarcus sp. (strain EbN1)).